The chain runs to 336 residues: Sodium/bile acid cotransporter 7 (336 aa).

Over 1-10 the chain is Cytoplasmic; that stretch reads MGLIARVRKE. The chain crosses the membrane as a helical span at residues 11–31; the sequence is WFIIGIVLVITFAKLQPSVGV. Residues 32–37 are Extracellular-facing; the sequence is KGGPLH. A helical membrane pass occupies residues 38–58; that stretch reads PEITITYVAVSVIFFNSGLSL. Residues 59 to 71 are Cytoplasmic-facing; that stretch reads KTEELASALMHVK. Residues 72-92 traverse the membrane as a helical segment; sequence LHFFVQTFTLVFFPIAIWLLL. The Extracellular portion of the chain corresponds to 93 to 116; sequence KVLALTAINEWLLRGLQTVACMPP. Residues 117–137 form a helical membrane-spanning segment; it reads PVSSAVILTKAVGGNEAAAIF. Position 138 (asparagine 138) is a topological domain, cytoplasmic. Residues 139–159 form a helical membrane-spanning segment; it reads SAFGSFLGIVVTPLLLLVFLG. Residues 160-163 are Extracellular-facing; the sequence is SSSS. The helical transmembrane segment at 164–184 threads the bilayer; sequence VPFTSIFSQLFMTVVVPLIVG. Residues 185-201 are Cytoplasmic-facing; sequence QVCRRFLRECLDRRKPP. The helical transmembrane segment at 202-222 threads the bilayer; the sequence is FGAVSSVVLLMIIYSTFCDTF. At 223–233 the chain is on the extracellular side; sequence NNPNIELDHLS. The helical transmembrane segment at 234–254 threads the bilayer; the sequence is LLTVVFIIFSIQLSFMALIFF. The Cytoplasmic portion of the chain corresponds to 255–270; that stretch reads LSTRKSSGFSAADSVA. The chain crosses the membrane as a helical span at residues 271 to 291; it reads IMFCATHKSLTLGIPMLKIVF. Over 292–298 the chain is Extracellular; the sequence is EGYEHLS. Residues 299–319 traverse the membrane as a helical segment; that stretch reads LISVPLLIYHPAQILLGSVLL. Residues 320–336 are Cytoplasmic-facing; the sequence is PSIKTWMSGRQKTLTPI.

Belongs to the bile acid:sodium symporter (BASS) (TC 2.A.28) family.

It is found in the cell membrane. The protein resides in the endoplasmic reticulum membrane. It localises to the golgi apparatus membrane. Involved in teeth and skeletal development. Has an essential role in the biosynthesis and trafficking of glycosaminoglycans and glycoproteins to produce a proper functioning extracellular matrix. Required for extracellular matrix mineralization. Also involved in the regulation of cellular calcium homeostasis. Does not show transport activity towards bile acids or steroid sulfates. The sequence is that of Sodium/bile acid cotransporter 7 (slc10a7) from Danio rerio (Zebrafish).